A 139-amino-acid chain; its full sequence is NADPH-dependent 7-cyano-7-deazaguanine reductase (139 aa).

Cys34 (thioimide intermediate) is an active-site residue. The active-site Proton donor is the Asp41. Substrate contacts are provided by residues 56–58 and 75–76; these read VEL and HE.

This sequence belongs to the GTP cyclohydrolase I family. QueF type 1 subfamily.

It localises to the cytoplasm. The enzyme catalyses 7-aminomethyl-7-carbaguanine + 2 NADP(+) = 7-cyano-7-deazaguanine + 2 NADPH + 3 H(+). The protein operates within tRNA modification; tRNA-queuosine biosynthesis. Functionally, catalyzes the NADPH-dependent reduction of 7-cyano-7-deazaguanine (preQ0) to 7-aminomethyl-7-deazaguanine (preQ1). In Thiobacillus denitrificans (strain ATCC 25259 / T1), this protein is NADPH-dependent 7-cyano-7-deazaguanine reductase.